The following is a 256-amino-acid chain: UPF0246 protein PG_1544 (256 aa).

Belongs to the UPF0246 family.

The polypeptide is UPF0246 protein PG_1544 (Porphyromonas gingivalis (strain ATCC BAA-308 / W83)).